A 671-amino-acid chain; its full sequence is MSMDISDFYQTFFDEADELLADMEQHLLDLVPESPDAEQLNAIFRAAHSIKGGAGTFGFTILQETTHLMENLLDEARRGEMQLNTDIINLFLETKDIMQEQLDAYKNSEEPDAASFEYICNALRQLALEAKGETTPAVVETAALSAAIQEESVAETESPRDESKLRIVLSRLKANEVDLLEEELGNLATLTDVVKGADSLSATLDGSVAEDDIVAVLCFVIEADQIAFEKVVAAPVEKAQEKTEVAPVAPPAVVAPAAKSAAHEHHAGREKPARERESTSIRVAVEKVDQLINLVGELVITQSMLAQRSNELDPVNHGDLITSMGQLQRNARDLQESVMSIRMMPMEYVFSRFPRLVRDLAGKLGKQVELTLVGSSTELDKSLIERIIDPLTHLVRNSLDHGIEMPEKRLEAGKNVVGNLILSAEHQGGNICIEVTDDGAGLNRERILAKAMSQGMAVNENMTDDEVGMLIFAPGFSTAEQVTDVSGRGVGMDVVKRNIQEMGGHVEIQSKQGSGTTIRILLPLTLAILDGMSVRVAGEVFILPLNAVMESLQPREEDLHPLAGGERVLEVRGEYLPLVELWKVFDVDGAKTEATQGIVVILQSAGRRYALLVDQLIGQHQVVVKNLESNYRKVPGISAATILGDGSVALIVDVSALQGLNREQRMAITAA.

Positions 1 to 105 (MSMDISDFYQ…DIMQEQLDAY (105 aa)) constitute an HPt domain. His48 is modified (phosphohistidine; by autocatalysis). The interval 256 to 278 (PAAKSAAHEHHAGREKPARERES) is disordered. Basic and acidic residues predominate over residues 261 to 278 (AAHEHHAGREKPARERES). The 253-residue stretch at 274–526 (RERESTSIRV…TIRILLPLTL (253 aa)) folds into the Histidine kinase domain. One can recognise a CheW-like domain in the interval 528–663 (ILDGMSVRVA…VSALQGLNRE (136 aa)).

In terms of assembly, trimer or tetramer.

The protein resides in the cytoplasm. It catalyses the reaction ATP + protein L-histidine = ADP + protein N-phospho-L-histidine.. In terms of biological role, involved in the transmission of sensory signals from the chemoreceptors to the flagellar motors. CheA is autophosphorylated; it can transfer its phosphate group to either CheB or CheY. The protein is Chemotaxis protein CheA (cheA) of Salmonella typhimurium (strain LT2 / SGSC1412 / ATCC 700720).